Here is a 131-residue protein sequence, read N- to C-terminus: Glycine cleavage system H protein (131 aa).

The 83-residue stretch at 24–106 (RVTVGISDHA…YGEGWIFVVE (83 aa)) folds into the Lipoyl-binding domain. Lys-65 carries the N6-lipoyllysine modification.

It belongs to the GcvH family. The glycine cleavage system is composed of four proteins: P, T, L and H. Requires (R)-lipoate as cofactor.

Functionally, the glycine cleavage system catalyzes the degradation of glycine. The H protein shuttles the methylamine group of glycine from the P protein to the T protein. The polypeptide is Glycine cleavage system H protein (Xanthomonas campestris pv. campestris (strain 8004)).